The primary structure comprises 529 residues: uncharacterized protein (529 aa).

ABC transporter domains follow at residues 6-257 and 287-526; these read LAIE…QKLL and IRKG…RQLL. Residues 42–49 and 319–326 contribute to the ATP site; these read GESGSGKS.

Belongs to the ABC transporter superfamily.

This is an uncharacterized protein from Escherichia coli (strain K12).